The following is a 204-amino-acid chain: Large ribosomal subunit protein uL4 (204 aa).

The interval 52 to 76 (AEVRGGGKKPWAQKGGGRARAGSRR) is disordered.

Belongs to the universal ribosomal protein uL4 family. Part of the 50S ribosomal subunit.

Functionally, one of the primary rRNA binding proteins, this protein initially binds near the 5'-end of the 23S rRNA. It is important during the early stages of 50S assembly. It makes multiple contacts with different domains of the 23S rRNA in the assembled 50S subunit and ribosome. Forms part of the polypeptide exit tunnel. This Sulfurimonas denitrificans (strain ATCC 33889 / DSM 1251) (Thiomicrospira denitrificans (strain ATCC 33889 / DSM 1251)) protein is Large ribosomal subunit protein uL4.